The sequence spans 572 residues: O-fucosyltransferase 16 (572 aa).

Residues 17 to 37 (LLPLVIAVSLSLLILFAFLSF) traverse the membrane as a helical; Signal-anchor for type II membrane protein segment. 2 N-linked (GlcNAc...) asparagine glycosylation sites follow: N92 and N136. Substrate is bound at residue 274-276 (HLR). N-linked (GlcNAc...) asparagine glycans are attached at residues N446 and N506. A disordered region spans residues 498-572 (ESRKLGKKNK…EPELEAMLSD (75 aa)). Positions 521 to 541 (DQTEEDDPDWSEPDYEEEQSD) are enriched in acidic residues. N549 carries N-linked (GlcNAc...) asparagine glycosylation. Over residues 554–566 (DYDDPSTSDEPEL) the composition is skewed to acidic residues.

This sequence belongs to the glycosyltransferase GT106 family.

The protein localises to the membrane. It functions in the pathway glycan metabolism. This chain is O-fucosyltransferase 16, found in Arabidopsis thaliana (Mouse-ear cress).